The following is a 122-amino-acid chain: Large ribosomal subunit protein uL14 (122 aa).

Belongs to the universal ribosomal protein uL14 family. Part of the 50S ribosomal subunit. Forms a cluster with proteins L3 and L19. In the 70S ribosome, L14 and L19 interact and together make contacts with the 16S rRNA in bridges B5 and B8.

Its function is as follows. Binds to 23S rRNA. Forms part of two intersubunit bridges in the 70S ribosome. The sequence is that of Large ribosomal subunit protein uL14 from Ruminiclostridium cellulolyticum (strain ATCC 35319 / DSM 5812 / JCM 6584 / H10) (Clostridium cellulolyticum).